Consider the following 185-residue polypeptide: Ribosome-recycling factor (185 aa).

Belongs to the RRF family.

The protein resides in the cytoplasm. In terms of biological role, responsible for the release of ribosomes from messenger RNA at the termination of protein biosynthesis. May increase the efficiency of translation by recycling ribosomes from one round of translation to another. This chain is Ribosome-recycling factor, found in Shewanella baltica (strain OS185).